A 514-amino-acid polypeptide reads, in one-letter code: Ras-GEF domain-containing family member 1B-A (514 aa).

One can recognise an N-terminal Ras-GEF domain in the interval 76–206 (HDNNLISGSL…MTQTLIRKLT (131 aa)). Residues 246-494 (DPFTLAQQLT…YLASYESEGP (249 aa)) enclose the Ras-GEF domain.

As to expression, detected in oocytes, and in embryos at 4 to 120 hours post-fertilization (hpf). Detected along marginal blastomeres at early epiboly stage and throughout the margin at the onset of gastrulation. At 60% epiboly, strongest expression is found in the dorsal shield region and is restricted to the epiblast. Detected in the anterior border of the presomitic mesoderm at the end of epiboly. Detected in adaxial cells, in the somites and in the nervous system during somitogenesis. Detected in diencephalon and hindbrain and in cells surrounding the notochord, including adaxial cells and ventral mesendoderm, in 15-somite stage embryos. At 48 hpf, detected mainly in the brain.

Functionally, guanine nucleotide exchange factor (GEF) for Ras family proteins (in vitro). This Danio rerio (Zebrafish) protein is Ras-GEF domain-containing family member 1B-A (rasgef1ba).